Here is a 187-residue protein sequence, read N- to C-terminus: Threonylcarbamoyl-AMP synthase (187 aa).

The YrdC-like domain occupies Q4–G187.

This sequence belongs to the SUA5 family. TsaC subfamily.

The protein localises to the cytoplasm. The catalysed reaction is L-threonine + hydrogencarbonate + ATP = L-threonylcarbamoyladenylate + diphosphate + H2O. In terms of biological role, required for the formation of a threonylcarbamoyl group on adenosine at position 37 (t(6)A37) in tRNAs that read codons beginning with adenine. Catalyzes the conversion of L-threonine, HCO(3)(-)/CO(2) and ATP to give threonylcarbamoyl-AMP (TC-AMP) as the acyladenylate intermediate, with the release of diphosphate. The protein is Threonylcarbamoyl-AMP synthase of Pseudoalteromonas translucida (strain TAC 125).